The following is a 33-amino-acid chain: Protein YdgV (33 aa).

The protein is Protein YdgV of Escherichia coli (strain K12).